A 151-amino-acid polypeptide reads, in one-letter code: Ribosome-binding factor A (151 aa).

The tract at residues 116–151 (DAEVARAAANARPAGDPDPYREPRPADDDDEDDEDE) is disordered. Positions 120–129 (ARAAANARPA) are enriched in low complexity. The segment covering 142 to 151 (DDDDEDDEDE) has biased composition (acidic residues).

Belongs to the RbfA family. In terms of assembly, monomer. Binds 30S ribosomal subunits, but not 50S ribosomal subunits or 70S ribosomes.

The protein resides in the cytoplasm. Functionally, one of several proteins that assist in the late maturation steps of the functional core of the 30S ribosomal subunit. Associates with free 30S ribosomal subunits (but not with 30S subunits that are part of 70S ribosomes or polysomes). Required for efficient processing of 16S rRNA. May interact with the 5'-terminal helix region of 16S rRNA. This Thermobifida fusca (strain YX) protein is Ribosome-binding factor A.